The chain runs to 685 residues: tRNA 5-methylaminomethyl-2-thiouridine biosynthesis bifunctional protein MnmC (685 aa).

A tRNA (mnm(5)s(2)U34)-methyltransferase region spans residues Met1 to Gln272. The segment at Ile278–Leu685 is FAD-dependent cmnm(5)s(2)U34 oxidoreductase.

The protein in the N-terminal section; belongs to the methyltransferase superfamily. tRNA (mnm(5)s(2)U34)-methyltransferase family. This sequence in the C-terminal section; belongs to the DAO family. FAD is required as a cofactor.

The protein localises to the cytoplasm. It carries out the reaction 5-aminomethyl-2-thiouridine(34) in tRNA + S-adenosyl-L-methionine = 5-methylaminomethyl-2-thiouridine(34) in tRNA + S-adenosyl-L-homocysteine + H(+). In terms of biological role, catalyzes the last two steps in the biosynthesis of 5-methylaminomethyl-2-thiouridine (mnm(5)s(2)U) at the wobble position (U34) in tRNA. Catalyzes the FAD-dependent demodification of cmnm(5)s(2)U34 to nm(5)s(2)U34, followed by the transfer of a methyl group from S-adenosyl-L-methionine to nm(5)s(2)U34, to form mnm(5)s(2)U34. In Shewanella baltica (strain OS185), this protein is tRNA 5-methylaminomethyl-2-thiouridine biosynthesis bifunctional protein MnmC.